Here is a 224-residue protein sequence, read N- to C-terminus: Small ribosomal subunit protein uS3 (224 aa).

The KH type-2 domain occupies 39–107 (IREFLKKKPS…DVWVEIAEVK (69 aa)).

This sequence belongs to the universal ribosomal protein uS3 family. In terms of assembly, part of the 30S ribosomal subunit. Forms a tight complex with proteins S10 and S14.

Functionally, binds the lower part of the 30S subunit head. Binds mRNA in the 70S ribosome, positioning it for translation. The sequence is that of Small ribosomal subunit protein uS3 from Chlamydia muridarum (strain MoPn / Nigg).